Here is a 923-residue protein sequence, read N- to C-terminus: ATP-dependent Clp protease ATP-binding subunit ClpA homolog CD4B, chloroplastic (923 aa).

In terms of domain architecture, Clp R spans 92–234 (FERFTEKAIK…RTQVIRMVGE (143 aa)). Repeat regions lie at residues 95–160 (FTEK…IGRG) and 170–234 (FTPR…MVGE). Residues 255 to 502 (LEEYGTNLTK…RVRLRHAQLP (248 aa)) are i. 300 to 307 (GEPGVGKT) contributes to the ATP binding site. The UVR domain occupies 509 to 544 (EKELRQITKEKNEAVRGQDFEKAGELRDREMDLKAQ). The II stretch occupies residues 569 to 760 (VTEADIQHIV…LLIMTSNVGS (192 aa)). Residue 643–650 (GPTGVGKS) participates in ATP binding.

Belongs to the ClpA/ClpB family.

The protein resides in the plastid. It is found in the chloroplast. In terms of biological role, may interact with a ClpP-like protease involved in degradation of denatured proteins in the chloroplast. The protein is ATP-dependent Clp protease ATP-binding subunit ClpA homolog CD4B, chloroplastic (CD4B) of Solanum lycopersicum (Tomato).